Reading from the N-terminus, the 421-residue chain is Outer capsid protein P8 (421 aa).

Belongs to the phytoreovirus outer capsid protein P8 family. In terms of assembly, homotrimer. Homomultimer. Interacts with host peroxisomal glycolate oxidase (GOX). This interaction mediates its relocation to virus factories peripheral to host peroxisomes.

Its subcellular location is the virion. It is found in the host cytoplasm. In terms of biological role, capsid protein which self-assembles to form the outer icosahedral capsid with a T=13 symmetry, about 70 nm in diameter and consisting of 780 molecules capsid proteins. In Alopecurus aequalis (Barnyard grass), this protein is Outer capsid protein P8.